A 122-amino-acid chain; its full sequence is Phospholipase A2 crotoxin basic chain (122 aa).

7 disulfide bridges follow: Cys26-Cys115, Cys28-Cys44, Cys43-Cys95, Cys49-Cys122, Cys50-Cys88, Cys57-Cys81, and Cys75-Cys86. Ca(2+)-binding residues include Tyr27, Gly29, and Gly31. His47 is an active-site residue. Asp48 is a Ca(2+) binding site. Asp89 is a catalytic residue.

As to quaternary structure, heterodimer of one acidic (CA also named crotapotin) and one basic (CB) subunits; non-covalently linked. The cofactor is Ca(2+). In terms of tissue distribution, expressed by the venom gland.

Its subcellular location is the secreted. It carries out the reaction a 1,2-diacyl-sn-glycero-3-phosphocholine + H2O = a 1-acyl-sn-glycero-3-phosphocholine + a fatty acid + H(+). Its function is as follows. Heterodimer CA-CB: Crotoxin is a potent presynaptic neurotoxin that possesses phospholipase A2 (PLA2) activity and exerts a lethal action by blocking neuromuscular transmission. It consists of a non-covalent association of a basic and weakly toxic PLA2 subunit (CB), with a small acidic, non-enzymatic and non-toxic subunit (CA also named crotapotin). The complex acts by binding to a specific 48-kDa protein (R48) receptor located on presynaptic membranes, forming a transient ternary complex CA-CB-R48, followed by dissociation of the CA-CB complex and release of the CA subunit. At equilibrium, only the CB subunits remain associated with the specific crotoxin receptor. In addition to neurotoxicity, crotoxin has been found to exert nephrotoxicity, and cardiovascular toxicity. Moreover, anti-inflammatory, immunomodulatory, anti-tumor and analgesic effects of crotoxin have also been reported. Functionally, monomer CB: The basic subunit of crotoxin is a snake venom phospholipase A2 (PLA2) that exhibits weak neurotoxicity and strong anticoagulant effects by binding to factor Xa (F10) and inhibiting the prothrombinase activity. In addition, it exerts myotoxicity, nephrotoxicity, and cardiovascular toxicity as well as anti-inflammatory, immunomodulatory, anti-tumor and analgesic effects. Also shows a strong antimicrobial activity against X.axonopodis passiforae (Gram-negative) which is completely dependent on the enzymatic activity. PLA2 catalyzes the calcium-dependent hydrolysis of the 2- acyl groups in 3-sn-phosphoglycerides. The protein is Phospholipase A2 crotoxin basic chain of Crotalus durissus collilineatus (Brazilian rattlesnake).